Consider the following 621-residue polypeptide: Pentatricopeptide repeat-containing protein At3g48250, chloroplastic (621 aa).

The N-terminal 67 residues, Met1 to Val67, are a transit peptide targeting the chloroplast. PPR repeat units lie at residues Ser122 to Leu156, Asp157 to Ser194, Ser262 to Met296, Asp297 to Pro331, Ser332 to Leu368, Ser369 to Pro403, Asp404 to Pro438, Asp439 to Ile473, Asp474 to Pro509, and Trp510 to Ala544.

It belongs to the PPR family. P subfamily.

The protein resides in the plastid. It localises to the chloroplast. In Arabidopsis thaliana (Mouse-ear cress), this protein is Pentatricopeptide repeat-containing protein At3g48250, chloroplastic.